The primary structure comprises 302 residues: Aspartate carbamoyltransferase catalytic subunit (302 aa).

Residues Arg53 and Thr54 each contribute to the carbamoyl phosphate site. Lys82 lines the L-aspartate pocket. 3 residues coordinate carbamoyl phosphate: Arg103, His131, and Gln134. L-aspartate contacts are provided by Arg164 and Arg223. Carbamoyl phosphate contacts are provided by Leu260 and Pro261.

Belongs to the aspartate/ornithine carbamoyltransferase superfamily. ATCase family. In terms of assembly, heterooligomer of catalytic and regulatory chains.

It catalyses the reaction carbamoyl phosphate + L-aspartate = N-carbamoyl-L-aspartate + phosphate + H(+). It functions in the pathway pyrimidine metabolism; UMP biosynthesis via de novo pathway; (S)-dihydroorotate from bicarbonate: step 2/3. Functionally, catalyzes the condensation of carbamoyl phosphate and aspartate to form carbamoyl aspartate and inorganic phosphate, the committed step in the de novo pyrimidine nucleotide biosynthesis pathway. This Methanococcus maripaludis (strain C5 / ATCC BAA-1333) protein is Aspartate carbamoyltransferase catalytic subunit.